The chain runs to 501 residues: Type II secretion system protein E (501 aa).

262 to 269 (GPTGSGKS) contacts ATP. Residues Cys395, Cys398, Cys428, and Cys431 each coordinate Zn(2+).

Belongs to the GSP E family. As to quaternary structure, forms homooligomers; most probably hexamers. Interacts with ExeL/GspL. Zn(2+) is required as a cofactor.

The protein localises to the cell inner membrane. It carries out the reaction ATP + H2O + cellular proteinSide 1 = ADP + phosphate + cellular proteinSide 2.. Its function is as follows. ATPase component of the type II secretion system required for the energy-dependent secretion of extracellular factors such as proteases and toxins from the periplasm. Acts as a molecular motor to provide the energy that is required for assembly of the pseudopilus and the extrusion of substrates generated in the cytoplasm. The chain is Type II secretion system protein E (exeE) from Aeromonas hydrophila.